The sequence spans 382 residues: Probable cytosolic iron-sulfur protein assembly protein 1 (382 aa).

7 WD repeats span residues 9 to 48, 55 to 107, 138 to 178, 185 to 224, 231 to 278, 303 to 342, and 349 to 382; these read AHHD…KFPR, THTR…DNDE, GHEH…EEFE, EHQQ…DDWG, GHQG…SETN, AHTY…WEIE, and HGVH…NVWE.

It belongs to the WD repeat CIA1 family. Interacts with NAR1.

It is found in the cytoplasm. The protein localises to the nucleus. In terms of biological role, essential component of the cytosolic iron-sulfur (Fe/S) protein assembly machinery. Required for the maturation of extramitochondrial Fe/S proteins. The protein is Probable cytosolic iron-sulfur protein assembly protein 1 of Meyerozyma guilliermondii (strain ATCC 6260 / CBS 566 / DSM 6381 / JCM 1539 / NBRC 10279 / NRRL Y-324) (Yeast).